A 508-amino-acid polypeptide reads, in one-letter code: Photosystem II CP47 reaction center protein (508 aa).

6 helical membrane-spanning segments follow: residues 21–36 (SVHIMHTALVSGWAGS), 101–115 (IVFSGLCFLAAIWHW), 140–156 (GIHLFLSGVACFGFGAF), 203–218 (IAAGTLGILAGLFHLS), 237–252 (VLSSSIAAVFFAAFVV), and 457–472 (SFALLFFFGHIWHGAR).

It belongs to the PsbB/PsbC family. PsbB subfamily. As to quaternary structure, PSII is composed of 1 copy each of membrane proteins PsbA, PsbB, PsbC, PsbD, PsbE, PsbF, PsbH, PsbI, PsbJ, PsbK, PsbL, PsbM, PsbT, PsbX, PsbY, PsbZ, Psb30/Ycf12, at least 3 peripheral proteins of the oxygen-evolving complex and a large number of cofactors. It forms dimeric complexes. It depends on Binds multiple chlorophylls. PSII binds additional chlorophylls, carotenoids and specific lipids. as a cofactor.

The protein localises to the plastid. The protein resides in the chloroplast thylakoid membrane. One of the components of the core complex of photosystem II (PSII). It binds chlorophyll and helps catalyze the primary light-induced photochemical processes of PSII. PSII is a light-driven water:plastoquinone oxidoreductase, using light energy to abstract electrons from H(2)O, generating O(2) and a proton gradient subsequently used for ATP formation. This is Photosystem II CP47 reaction center protein from Illicium oligandrum (Star anise).